The chain runs to 126 residues: Glycine cleavage system H protein (126 aa).

Residues 22 to 104 (VAIIGITEYA…YEKAWMVKVE (83 aa)) form the Lipoyl-binding domain. Residue Lys-63 is modified to N6-lipoyllysine.

This sequence belongs to the GcvH family. In terms of assembly, the glycine cleavage system is composed of four proteins: P, T, L and H. (R)-lipoate is required as a cofactor.

In terms of biological role, the glycine cleavage system catalyzes the degradation of glycine. The H protein shuttles the methylamine group of glycine from the P protein to the T protein. Its function is as follows. Is also involved in protein lipoylation via its role as an octanoyl/lipoyl carrier protein intermediate. The polypeptide is Glycine cleavage system H protein (Staphylococcus aureus (strain USA300)).